The following is a 486-amino-acid chain: Cephamycin export protein CmcT (486 aa).

Transmembrane regions (helical) follow at residues Val-24 to Leu-44, Ala-56 to Gly-76, Val-88 to Ser-108, Ala-121 to Gly-141, Ala-153 to Leu-173, Val-178 to Ala-198, Leu-210 to Ser-230, Ala-241 to Ala-261, Leu-284 to Met-304, Leu-317 to Leu-337, Val-345 to Thr-365, Ala-369 to Gly-389, Phe-418 to Ser-438, and Phe-450 to Leu-470.

This sequence belongs to the major facilitator superfamily.

It localises to the cell membrane. Functionally, involved in cephamycin export. The sequence is that of Cephamycin export protein CmcT (cmcT) from Amycolatopsis lactamdurans (Nocardia lactamdurans).